Reading from the N-terminus, the 448-residue chain is CCA-adding enzyme (448 aa).

ATP-binding residues include S52 and K55. S52 and K55 together coordinate CTP. Residues D64, D66, and D118 each coordinate Mg(2+). ATP contacts are provided by H141, K160, and Y169. The CTP site is built by H141, K160, and Y169.

The protein belongs to the tRNA nucleotidyltransferase/poly(A) polymerase family. Archaeal CCA-adding enzyme subfamily. Homodimer. Mg(2+) serves as cofactor.

The catalysed reaction is a tRNA precursor + 2 CTP + ATP = a tRNA with a 3' CCA end + 3 diphosphate. The enzyme catalyses a tRNA with a 3' CCA end + 2 CTP + ATP = a tRNA with a 3' CCACCA end + 3 diphosphate. Functionally, catalyzes the addition and repair of the essential 3'-terminal CCA sequence in tRNAs without using a nucleic acid template. Adds these three nucleotides in the order of C, C, and A to the tRNA nucleotide-73, using CTP and ATP as substrates and producing inorganic pyrophosphate. tRNA 3'-terminal CCA addition is required both for tRNA processing and repair. Also involved in tRNA surveillance by mediating tandem CCA addition to generate a CCACCA at the 3' terminus of unstable tRNAs. While stable tRNAs receive only 3'-terminal CCA, unstable tRNAs are marked with CCACCA and rapidly degraded. The protein is CCA-adding enzyme of Pyrococcus abyssi (strain GE5 / Orsay).